Reading from the N-terminus, the 505-residue chain is Glycerol kinase (505 aa).

Position 12 (Thr12) interacts with ADP. Positions 12, 13, and 14 each coordinate ATP. Thr12 provides a ligand contact to sn-glycerol 3-phosphate. An ADP-binding site is contributed by Arg16. Sn-glycerol 3-phosphate contacts are provided by Arg82, Glu83, Tyr134, and Asp249. Residues Arg82, Glu83, Tyr134, Asp249, and Gln250 each contribute to the glycerol site. ADP contacts are provided by Thr271 and Gly315. ATP-binding residues include Thr271, Gly315, Gln319, and Gly416. Gly416 and Asn420 together coordinate ADP.

Belongs to the FGGY kinase family.

It catalyses the reaction glycerol + ATP = sn-glycerol 3-phosphate + ADP + H(+). It participates in polyol metabolism; glycerol degradation via glycerol kinase pathway; sn-glycerol 3-phosphate from glycerol: step 1/1. Its activity is regulated as follows. Inhibited by fructose 1,6-bisphosphate (FBP). In terms of biological role, key enzyme in the regulation of glycerol uptake and metabolism. Catalyzes the phosphorylation of glycerol to yield sn-glycerol 3-phosphate. The polypeptide is Glycerol kinase (Mycolicibacterium vanbaalenii (strain DSM 7251 / JCM 13017 / BCRC 16820 / KCTC 9966 / NRRL B-24157 / PYR-1) (Mycobacterium vanbaalenii)).